The following is a 392-amino-acid chain: DNA primase small subunit PriS (392 aa).

Active-site residues include aspartate 98, aspartate 100, and aspartate 295.

This sequence belongs to the eukaryotic-type primase small subunit family. Heterodimer of a small subunit (PriS) and a large subunit (PriL). Requires Mg(2+) as cofactor. Mn(2+) serves as cofactor.

In terms of biological role, catalytic subunit of DNA primase, an RNA polymerase that catalyzes the synthesis of short RNA molecules used as primers for DNA polymerase during DNA replication. The small subunit contains the primase catalytic core and has DNA synthesis activity on its own. Binding to the large subunit stabilizes and modulates the activity, increasing the rate of DNA synthesis while decreasing the length of the DNA fragments, and conferring RNA synthesis capability. The DNA polymerase activity may enable DNA primase to also catalyze primer extension after primer synthesis. May also play a role in DNA repair. The protein is DNA primase small subunit PriS of Haloarcula marismortui (strain ATCC 43049 / DSM 3752 / JCM 8966 / VKM B-1809) (Halobacterium marismortui).